The following is a 1039-amino-acid chain: Integrin alpha-4 (1039 aa).

Residues 1–40 (MFSTKSAWLRNGGADQGPRGIALREAVMLLLYFGVPTGPS) form the signal peptide. Over 41-983 (YNLDPENALL…LHHQRPKRHF (943 aa)) the chain is Extracellular. FG-GAP repeat units follow at residues 42-107 (NLDP…PNQT), 117-184 (SGEP…TELS), 193-244 (DYTR…QYKA), 246-298 (VDRQ…ENEL), 299-358 (NIVY…GAVM), 362-419 (ERVL…GISS), and 423-485 (QRIE…HPES). N86, N105, and N145 each carry an N-linked (GlcNAc...) asparagine glycan. Cysteines 98 and 108 form a disulfide. 2 disulfide bridges follow: C151/C172 and C190/C205. N236 carries an N-linked (GlcNAc...) asparagine glycan. The Ca(2+) site is built by D321, N323, D325, D329, D384, D386, D388, D392, D446, D448, N450, Y452, and D454. N-linked (GlcNAc...) asparagine glycosylation is present at N487. 2 disulfides stabilise this stretch: C493–C502 and C508–C564. N525 and N545 each carry an N-linked (GlcNAc...) asparagine glycan. The SG1 signature appears at 613 to 623 (KKEKDVIRKMI). A disulfide bond links C629 and C634. N-linked (GlcNAc...) asparagine glycans are attached at residues N633, N652, and N667. C705 and C718 are joined by a disulfide. N813 and N828 each carry an N-linked (GlcNAc...) asparagine glycan. 2 cysteine pairs are disulfide-bonded: C859–C897 and C904–C909. Residues 984-1007 (TIIIITISLLLGLIVLLLISCVMW) traverse the membrane as a helical segment. Residues 1008–1039 (KAGFFKRQYKSILQEENRRDSWSYVNSKSNDD) lie on the Cytoplasmic side of the membrane. The GFFKR motif signature appears at 1010-1014 (GFFKR). Residue S1028 is modified to Phosphoserine.

The protein belongs to the integrin alpha chain family. Heterodimer of an alpha and a beta subunit. The alpha subunit can sometimes be cleaved into two non-covalently associated fragments. Alpha-4 associates with either beta-1 or beta-7. Alpha-4 interacts with PXN, LPXN, and TGFB1I1/HIC5. Interacts with CSPG4 through CSPG4 chondroitin sulfate glycosaminoglycan. Interacts with JAML; integrin alpha-4/beta-1 may regulate leukocyte to endothelial cells adhesion by controlling JAML homodimerization. ITGA4:ITGB1 is found in a ternary complex with CX3CR1 and CX3CL1. Interacts with MDK. ITGA4:ITGB1 interacts with MDK; this interaction mediates MDK-induced osteoblast cells migration through PXN phosphorylation. Integrin ITGA4:ITGB1 interacts with SVEP1 (via Sushi domain 21); thereby inhibits Ca(2+) intracellular signaling and as a result represses vasocontraction. ITGA4:ITGB1 interacts with SELP. ITGA4:ITGB1 interacts with BCAM. In terms of processing, phosphorylation on Ser-1028 inhibits PXN binding. In terms of tissue distribution, expressed in the media layer of the arterial wall (at protein level). Weakly expression in the thymus, spleen and mesenteric lymph nodes.

The protein localises to the membrane. Functionally, integrins alpha-4/beta-1 (VLA-4 or LPAM-2) and alpha-4/beta-7 (LPAM-1) are receptors for fibronectin. They recognize one or more domains within the alternatively spliced CS-1 and CS-5 regions of fibronectin. They are also receptors for VCAM1. Integrin alpha-4/beta-1 recognizes the sequence Q-I-D-S in VCAM1. Integrin alpha-4/beta-7 is also a receptor for MADCAM1. It recognizes the sequence L-D-T in MADCAM1. On activated endothelial cells integrin VLA-4 triggers homotypic aggregation for most VLA-4-positive leukocyte cell lines. It may also participate in cytolytic T-cell interactions with target cells. ITGA4:ITGB1 binds to fractalkine (CX3CL1) and may act as its coreceptor in CX3CR1-dependent fractalkine signaling. ITGA4:ITGB1 binds to PLA2G2A via a site (site 2) which is distinct from the classical ligand-binding site (site 1) and this induces integrin conformational changes and enhanced ligand binding to site 1. Integrin ITGA4:ITGB1 represses PRKCA-mediated L-type voltage-gated channel Ca(2+) influx and ROCK-mediated calcium sensitivity in vascular smooth muscle cells via its interaction with SVEP1, thereby inhibiting vasocontraction. This Mus musculus (Mouse) protein is Integrin alpha-4 (Itga4).